The sequence spans 162 residues: Regulatory protein RecX (162 aa).

Belongs to the RecX family.

The protein resides in the cytoplasm. Modulates RecA activity. The sequence is that of Regulatory protein RecX from Pectobacterium atrosepticum (strain SCRI 1043 / ATCC BAA-672) (Erwinia carotovora subsp. atroseptica).